The primary structure comprises 204 residues: Signal peptidase I (204 aa).

Residues 1–10 (MNSFKNFLKE) lie on the Cytoplasmic side of the membrane. A helical transmembrane segment spans residues 11–30 (WGLFLLILSLLALSRIFFWS). Residues 31 to 204 (NVRVEGHSMD…LWPITRIGTF (174 aa)) lie on the Extracellular side of the membrane. Residues serine 38 and lysine 76 contribute to the active site.

The protein belongs to the peptidase S26 family.

The protein localises to the cell membrane. The enzyme catalyses Cleavage of hydrophobic, N-terminal signal or leader sequences from secreted and periplasmic proteins.. This chain is Signal peptidase I (lepB), found in Streptococcus pneumoniae serotype 4 (strain ATCC BAA-334 / TIGR4).